A 149-amino-acid chain; its full sequence is C-type lectin domain family 2 member B (149 aa).

The Cytoplasmic segment spans residues Met1–Lys7. Residues Cys8–Val25 traverse the membrane as a helical; Signal-anchor for type II membrane protein segment. The Extracellular portion of the chain corresponds to Lys26–His149. The cysteines at positions 35 and 46 are disulfide-linked. Residues Phe42–Arg145 enclose the C-type lectin domain. Asn57, Asn62, and Asn100 each carry an N-linked (GlcNAc...) asparagine glycan. 2 disulfide bridges follow: Cys63–Cys144 and Cys123–Cys136.

In terms of assembly, homodimer. Interacts with NKp80/KLRF1. Post-translationally, (Microbial infection) Ubiquitinated by human herpesvirus 8 protein K5, leading to endolysosomal degradation. In terms of processing, N-linked glycosylated; required to enable surface expression and the extent of surface expression correlates with the number of functional conventional N-glycosylation sites. In terms of tissue distribution, expressed preferentially in lymphoid tissues, and in most hematopoietic cell types.

The protein resides in the cell membrane. The protein localises to the golgi apparatus membrane. In terms of biological role, membrane-bound protein expressed on myeloid cells which acts as a ligand to stimulate the activating receptor NKp80/KLRF1, expressed on the surface of natural killer (NK) cells. In turn, stimulates NK-cell cytotoxicity and cytokine production leading to the cytolysis of malignant CLEC2B-expressing myeloid cells. This is C-type lectin domain family 2 member B (CLEC2B) from Homo sapiens (Human).